Consider the following 1668-residue polypeptide: Zinc finger CCCH domain-containing protein 13 (1668 aa).

Disordered regions lie at residues 1-38 (MSKI…GSTA) and 56-157 (TCRF…GDIN). Over residues 10–23 (VENTKTISDSTSRR) the composition is skewed to polar residues. Residues 36-64 (STAETQCRNWLKTGNCLYGNTCRFVHGPS) form a C3H1-type zinc finger. Phosphoserine occurs at positions 64 and 77. Residues 76 to 136 (RSPERPTGDL…IKITKERTPE (61 aa)) are compositionally biased toward basic and acidic residues. Glycyl lysine isopeptide (Lys-Gly) (interchain with G-Cter in SUMO2) cross-links involve residues lysine 179 and lysine 194. Disordered stretches follow at residues 190-1112 (EIII…TATA) and 1125-1466 (AAAT…PISD). Residues serine 198, serine 207, serine 209, and serine 211 each carry the phosphoserine modification. Residues 204–213 (SKLSPSPSLR) show a composition bias toward low complexity. Positions 214–224 (KSSKSPKRKSS) are enriched in basic residues. Residue threonine 237 is modified to Phosphothreonine. Phosphoserine is present on residues serine 238 and serine 242. A compositionally biased stretch (polar residues) spans 239 to 254 (AVSSPLLDQQRNSKTN). Threonine 263 is modified (phosphothreonine). Serine 265 carries the post-translational modification Phosphoserine. The span at 283–315 (KYKVKDRIEEKTRDGKDRGRDFERQREKRDKPR) shows a compositional bias: basic and acidic residues. Phosphoserine is present on residues serine 316, serine 318, serine 325, and serine 328. Positions 323–346 (HHSPISSRHHSSSSQSGSSIQRHS) are enriched in low complexity. Residues threonine 354 and threonine 364 each carry the phosphothreonine modification. A phosphoserine mark is found at serine 370, serine 372, and serine 381. Residues 370–382 (SASPYPSHSLSSP) show a composition bias toward low complexity. Basic and acidic residues-rich tracts occupy residues 394 to 434 (PMRE…REER) and 442 to 575 (SSRD…EKGS). The span at 584 to 593 (DSHSSNSNYH) shows a compositional bias: low complexity. Positions 594–640 (DSWETRSSYPERDRYPERDNRDQARDSSFERRHGERDRRDNRERDQR) are enriched in basic and acidic residues. Serine 643 carries the post-translational modification Phosphoserine. The stretch at 645–789 (IRHQGRNDEL…RDKERERQRD (145 aa)) forms a coiled coil. Basic and acidic residues predominate over residues 649–821 (GRNDELERDE…NPRDGHDERK (173 aa)). Serine 831, serine 833, serine 837, serine 845, serine 848, serine 853, serine 873, serine 875, and serine 877 each carry phosphoserine. The segment covering 881–957 (LTEDRQGRWK…TSDRAHDENK (77 aa)) has biased composition (basic and acidic residues). At threonine 882 the chain carries Phosphothreonine. Residue serine 943 is modified to Phosphoserine. Over residues 958 to 969 (KKAKIQKKPIKK) the composition is skewed to basic residues. The segment covering 970 to 981 (KKEDDVGIERGN) has biased composition (basic and acidic residues). Serine 986, serine 993, serine 1010, serine 1014, and serine 1017 each carry phosphoserine. A compositionally biased stretch (basic residues) spans 996–1010 (KGQKKKSIEKKRKKS). Threonine 1033 carries the post-translational modification Phosphothreonine. Basic and acidic residues predominate over residues 1073–1083 (PDRTEVTEAEH). Composition is skewed to low complexity over residues 1084-1100 (TATA…LSSL) and 1125-1153 (AAAT…TFAN). Positions 1163 to 1188 (TRVEKVETPHVTIEDAQHRKPMDQKR) are enriched in basic and acidic residues. Threonine 1170 is subject to Phosphothreonine. A phosphoserine mark is found at serine 1191, serine 1194, serine 1208, and serine 1210. The segment covering 1213 to 1223 (SAHRSGDDQSG) has biased composition (basic and acidic residues). Serine 1230 is subject to Phosphoserine. 2 stretches are compositionally biased toward basic and acidic residues: residues 1231–1286 (GSRD…DRQV) and 1294–1379 (DSRD…DRTF). Positions 1300 to 1366 (QERDRYEHDR…RERERLISDS (67 aa)) form a coiled coil. Serine 1364, serine 1366, serine 1382, serine 1386, serine 1406, serine 1409, serine 1438, leucine 1453, glycine 1456, serine 1465, and aspartate 1466 each carry phosphoserine. Composition is skewed to basic and acidic residues over residues 1386 to 1421 (SVKR…DKDL) and 1429 to 1438 (ETNKSERTES).

It belongs to the ZC3H13 family. Component of the WMM complex, a N6-methyltransferase complex composed of a catalytic subcomplex, named MAC, and of an associated subcomplex, named MACOM. The MAC subcomplex is composed of METTL3 and METTL14. The MACOM subcomplex is composed of WTAP, ZC3H13, CBLL1/HAKAI, VIRMA, and, in some cases of RBM15 (RBM15 or RBM15B). Also a component of a MACOM-like complex, named WTAP complex, composed of WTAP, ZC3H13, CBLL1/HAKAI, VIRMA, RBM15, BCLAF1 and THRAP3.

It localises to the nucleus speckle. The protein localises to the nucleus. Its subcellular location is the nucleoplasm. In terms of biological role, associated component of the WMM complex, a complex that mediates N6-methyladenosine (m6A) methylation of RNAs, a modification that plays a role in the efficiency of mRNA splicing and RNA processing. Acts as a key regulator of m6A methylation by promoting m6A methylation of mRNAs at the 3'-UTR. Controls embryonic stem cells (ESCs) pluripotency via its role in m6A methylation. In the WMM complex, anchors component of the MACOM subcomplex in the nucleus. Also required for bridging WTAP to the RNA-binding component RBM15 (RBM15 or RBM15B). The chain is Zinc finger CCCH domain-containing protein 13 from Homo sapiens (Human).